Consider the following 145-residue polypeptide: 3-dehydroquinate dehydratase (145 aa).

Residue Y22 is the Proton acceptor of the active site. The substrate site is built by N71, H77, and D84. Residue H97 is the Proton donor of the active site. Substrate contacts are provided by residues 98–99 (LS) and R108.

This sequence belongs to the type-II 3-dehydroquinase family. Homododecamer.

It catalyses the reaction 3-dehydroquinate = 3-dehydroshikimate + H2O. The protein operates within metabolic intermediate biosynthesis; chorismate biosynthesis; chorismate from D-erythrose 4-phosphate and phosphoenolpyruvate: step 3/7. Functionally, catalyzes a trans-dehydration via an enolate intermediate. This is 3-dehydroquinate dehydratase from Francisella tularensis subsp. mediasiatica (strain FSC147).